Consider the following 111-residue polypeptide: Flagellar hook-basal body complex protein FliE (111 aa).

Belongs to the FliE family.

It localises to the bacterial flagellum basal body. This chain is Flagellar hook-basal body complex protein FliE, found in Brucella abortus (strain S19).